Consider the following 199-residue polypeptide: Recombination protein RecR (199 aa).

Residues 57-72 (CRQCRTLTEDELCPQC) form a C4-type zinc finger. The region spanning 80–174 (SLLCVVQSPV…TISRIAHGVP (95 aa)) is the Toprim domain.

Belongs to the RecR family.

In terms of biological role, may play a role in DNA repair. It seems to be involved in an RecBC-independent recombinational process of DNA repair. It may act with RecF and RecO. This Stutzerimonas stutzeri (strain A1501) (Pseudomonas stutzeri) protein is Recombination protein RecR.